The primary structure comprises 326 residues: MAFTPFPPRQPTASARLPLTLMTLDDWALATITGADSEKYMQGQVTADVSQMAEDQHLLAAHCDAKGKMWSNLRLFRDGDGFAWIERRSVREPQLTELKKYAVFSKVTIAPDDEHVLLGVAGFQARAALANIFSELPSKEKQVVKEGATTLLWFEYPAERFLIVTDEATANMLTDKLRGEAELNNSQQWLALNIEAGFPVIDAANSGQFIPQATNLQALGGISFKKGCYTGQEMVARAKFRGANKRALWLLAGSASRLPEAGEDLELKMGENWRRTGTVLAAVKLEDGQVVVQVVMNNDMEPDSIFRVRDDANTLHIEPLPYSLEE.

Residues W27 and W189 each coordinate folate.

Belongs to the tRNA-modifying YgfZ family.

It is found in the cytoplasm. Folate-binding protein involved in regulating the level of ATP-DnaA and in the modification of some tRNAs. It is probably a key factor in regulatory networks that act via tRNA modification, such as initiation of chromosomal replication. This chain is tRNA-modifying protein YgfZ, found in Shigella sonnei (strain Ss046).